A 234-amino-acid chain; its full sequence is MKAAVVVFPGSNCDKDTFYVLKYVMGFDCYYVFHKDHFYEKEFDLIVLPGGFSYGDYLRAGAIARFSPVMRSVSKAAENGVLIVGICNGFQILTEAGLLPGVLMKNKDLRFHCHDVYLRVDNNKTPFTLAYSEGEVIKMNIAHGEGNYYFDHCKEIEDKIVLRYCDRNGNITEDSNPNGSVLNIAGIVSKNGNVFGLMPHPERCSEKLLGSDNGKKIFESVALYLERRKDHAFA.

In terms of domain architecture, Glutamine amidotransferase type-1 spans 3 to 231; that stretch reads AAVVVFPGSN…ALYLERRKDH (229 aa). Catalysis depends on Cys87, which acts as the Nucleophile. Catalysis depends on residues His200 and Glu202.

In terms of assembly, part of the FGAM synthase complex composed of 1 PurL, 1 PurQ and 2 PurS subunits.

It is found in the cytoplasm. The catalysed reaction is N(2)-formyl-N(1)-(5-phospho-beta-D-ribosyl)glycinamide + L-glutamine + ATP + H2O = 2-formamido-N(1)-(5-O-phospho-beta-D-ribosyl)acetamidine + L-glutamate + ADP + phosphate + H(+). It catalyses the reaction L-glutamine + H2O = L-glutamate + NH4(+). The protein operates within purine metabolism; IMP biosynthesis via de novo pathway; 5-amino-1-(5-phospho-D-ribosyl)imidazole from N(2)-formyl-N(1)-(5-phospho-D-ribosyl)glycinamide: step 1/2. Functionally, part of the phosphoribosylformylglycinamidine synthase complex involved in the purines biosynthetic pathway. Catalyzes the ATP-dependent conversion of formylglycinamide ribonucleotide (FGAR) and glutamine to yield formylglycinamidine ribonucleotide (FGAM) and glutamate. The FGAM synthase complex is composed of three subunits. PurQ produces an ammonia molecule by converting glutamine to glutamate. PurL transfers the ammonia molecule to FGAR to form FGAM in an ATP-dependent manner. PurS interacts with PurQ and PurL and is thought to assist in the transfer of the ammonia molecule from PurQ to PurL. The chain is Phosphoribosylformylglycinamidine synthase subunit PurQ from Pseudothermotoga lettingae (strain ATCC BAA-301 / DSM 14385 / NBRC 107922 / TMO) (Thermotoga lettingae).